We begin with the raw amino-acid sequence, 65 residues long: Prokaryotic ubiquitin-like protein Pup (65 aa).

A compositionally biased stretch (basic and acidic residues) spans 1–13 (MAQEQKQPRKSSE). Positions 1-34 (MAQEQKQPRKSSEADEAVEAVAETDVSERKEALD) are disordered. Positions 21-59 (VAETDVSERKEALDSDVDDILDEIDDVLETNAEDFVKSF) are ARC ATPase binding. Residues 25–49 (DVSERKEALDSDVDDILDEIDDVLE) adopt a coiled-coil conformation. Glu-65 is covalently cross-linked (Isoglutamyl lysine isopeptide (Glu-Lys) (interchain with K-? in acceptor proteins)).

This sequence belongs to the prokaryotic ubiquitin-like protein family. In terms of assembly, strongly interacts with the proteasome-associated ATPase ARC through a hydrophobic interface; the interacting region of Pup lies in its C-terminal half. There is one Pup binding site per ARC hexamer ring.

The protein operates within protein degradation; proteasomal Pup-dependent pathway. In terms of biological role, protein modifier that is covalently attached to lysine residues of substrate proteins, thereby targeting them for proteasomal degradation. The tagging system is termed pupylation. The sequence is that of Prokaryotic ubiquitin-like protein Pup from Nocardioides sp. (strain ATCC BAA-499 / JS614).